The primary structure comprises 264 residues: Glycosylphosphatidylinositol anchor biosynthesis protein 11 (264 aa).

Residues M1–E45 are disordered. 6 consecutive transmembrane segments (helical) span residues N49–W69, L83–A103, L132–F152, A160–Y180, S202–L222, and V233–L253.

The protein belongs to the PIGF family.

It localises to the endoplasmic reticulum membrane. Its pathway is glycolipid biosynthesis; glycosylphosphatidylinositol-anchor biosynthesis. Its function is as follows. Acts in the GPI biosynthetic pathway between GlcNAc-PI synthesis and GPI transfer to protein. In Pyricularia oryzae (strain 70-15 / ATCC MYA-4617 / FGSC 8958) (Rice blast fungus), this protein is Glycosylphosphatidylinositol anchor biosynthesis protein 11 (GPI11).